The primary structure comprises 68 residues: Urocalcin (68 aa).

Residues 1–27 form the signal peptide; it reads MKASTLVVIFIVIFITISSFSIHDVQA. Residues 28-35 constitute a propeptide that is removed on maturation; the sequence is SGVEKREQ. Intrachain disulfides connect Cys38–Cys52, Cys45–Cys56, and Cys51–Cys67. Positions 57–59 are essential for stimulation of [3H]ryanodine binding to RYR1; that stretch reads KRR.

This sequence belongs to the scorpion calcin family. Expressed by the venom gland.

It localises to the secreted. In terms of biological role, this toxin only weakly stabilizes ryanodine receptor 1 (RyR1) opening in a long-lasting subconductance state (55% of the full conductance state obtained only at high concentrations (1 uM)). In addition, it has been shown to dose-dependently stimulate ryanodine binding to RyR1 with the lowest activity of all calcins (EC(50)=376 nM). It also augments the bell-shaped calcium-[3H]ryanodine binding curve that is maximal at about 10 uM calcium concentration. It binds a different site as ryanodine. It acts synergistically with caffeine. In contrast to other calcins, it does not trigger calcium release from sarcoplasmic vesicles even at high concentration (1 uM). In vivo, intracerebroventricular injection into mice induces neurotoxic symptoms, followed by death. This is Urocalcin from Urodacus yaschenkoi (Inland robust scorpion).